Consider the following 317-residue polypeptide: Cold tolerance protein 1 (317 aa).

Belongs to the CTO1 family.

Functionally, protein required for cold tolerance. Plays a role in the regulation of phosphate uptake. This chain is Cold tolerance protein 1, found in Saccharomyces cerevisiae (strain ATCC 204508 / S288c) (Baker's yeast).